Here is a 95-residue protein sequence, read N- to C-terminus: Ubiquinol-cytochrome-c reductase complex assembly factor 3 (95 aa).

The Mitochondrial matrix segment spans residues 1 to 7 (MTTLRKL). A helical transmembrane segment spans residues 8–28 (LLVGALLGAGAGVGTALFALV). Residues 23-80 (ALFALVTPGEERKQAMLKEMPEQYPQRRDEAARTKELLLATLQEAAATQENVAWRKNW) form a mediates lipid-binding region. Over 29–95 (TPGEERKQAM…GGGGGGGRSA (67 aa)) the chain is Mitochondrial intermembrane.

Belongs to the UQCC3 family. As to quaternary structure, associates with the ubiquinol-cytochrome c reductase complex (mitochondrial respiratory chain complex III(CIII) or cytochrome b-c1 complex). Interacts with UQCC1. Forms a complex, named COMC, composed of UQCC1, UQCC2; UQCC3 and UQCC4; mediates MT-CYB hemylation and association with the first nuclear-encoded complex III subunit UQCRQ. Probably cleaved by OMA1 under mitochondrial stress conditions.

It is found in the mitochondrion inner membrane. Required for the assembly of the ubiquinol-cytochrome c reductase complex (mitochondrial respiratory chain complex III or cytochrome b-c1 complex), mediating cytochrome b recruitment and probably stabilization within the complex. Thereby, plays an important role in ATP production by mitochondria. Cardiolipin-binding protein, it may also control the cardiolipin composition of mitochondria membranes and their morphology. This is Ubiquinol-cytochrome-c reductase complex assembly factor 3 from Bos taurus (Bovine).